We begin with the raw amino-acid sequence, 185 residues long: uncharacterized protein (185 aa).

An N-terminal signal peptide occupies residues 1–18; it reads MLLKLILILCFLVTLSLS. Residues 30 to 185 are disordered; it reads TQGPTIASGG…VQDCGEITGW (156 aa). Residues 86–101 are compositionally biased toward basic and acidic residues; it reads RAQEGGKKDTTKEQPK. Residues 103-116 are compositionally biased toward low complexity; sequence NNNNKNLGRHSSSG. The span at 117 to 135 shows a compositional bias: gly residues; sequence SGSGSGSGCGVTGDTGTGS.

It localises to the secreted. This is an uncharacterized protein from Dictyostelium discoideum (Social amoeba).